A 616-amino-acid polypeptide reads, in one-letter code: Chaperone protein HscA (616 aa).

Belongs to the heat shock protein 70 family.

Chaperone involved in the maturation of iron-sulfur cluster-containing proteins. Has a low intrinsic ATPase activity which is markedly stimulated by HscB. Involved in the maturation of IscU. The sequence is that of Chaperone protein HscA from Klebsiella pneumoniae subsp. pneumoniae (strain ATCC 700721 / MGH 78578).